Reading from the N-terminus, the 98-residue chain is MTARFMTDPHAMRDMAGRFEMHAQTVEDEARKMWASSQNIAGAGWSGMASATSLDTMGQMNTAFRNIVNMLHSVRDGLVRDANNYEQQEQASQQVLRG.

It belongs to the WXG100 family. CFP-10 subfamily.

The protein localises to the secreted. In terms of biological role, alters the host macrophage cytoskeleton and enhances macrophage motility. Promotes granuloma efflux, extrapulmonary dissemination of infection and bone disease. This is ESAT-6-like protein EsxM from Mycobacterium marinum (strain ATCC BAA-535 / M).